Reading from the N-terminus, the 186-residue chain is Peptide deformylase (186 aa).

Residues cysteine 113 and histidine 156 each contribute to the Fe cation site. Residue glutamate 157 is part of the active site. Histidine 160 is a binding site for Fe cation.

Belongs to the polypeptide deformylase family. Fe(2+) serves as cofactor.

It carries out the reaction N-terminal N-formyl-L-methionyl-[peptide] + H2O = N-terminal L-methionyl-[peptide] + formate. In terms of biological role, removes the formyl group from the N-terminal Met of newly synthesized proteins. Requires at least a dipeptide for an efficient rate of reaction. N-terminal L-methionine is a prerequisite for activity but the enzyme has broad specificity at other positions. The chain is Peptide deformylase from Limosilactobacillus reuteri (strain DSM 20016) (Lactobacillus reuteri).